We begin with the raw amino-acid sequence, 356 residues long: Thrombomodulin (356 aa).

Residues Arg1–Ser296 lie on the Extracellular side of the membrane. EGF-like domains are found at residues Gly17–Gly57 and Ala60–Glu98. Cystine bridges form between Cys21/Cys32, Cys28/Cys41, Cys43/Cys56, Cys64/Cys72, Cys68/Cys82, Cys84/Cys97, Cys103/Cys114, Cys110/Cys123, Cys125/Cys136, Cys143/Cys152, Cys148/Cys162, Cys164/Cys178, Cys182/Cys191, Cys187/Cys199, Cys201/Cys213, Cys219/Cys228, Cys224/Cys237, and Cys239/Cys253. Residues Asp99–Val137 enclose the EGF-like 3; calcium-binding domain. 2 EGF-like domains span residues Pro139–Gln179 and Cys178–Thr214. The EGF-like 6; calcium-binding domain maps to Asp215–Asp254. Positions Pro255–Pro290 are disordered. O-linked (Xyl...) (chondroitin sulfate) serine glycosylation is present at Ser271. Residues Gly297–Leu320 traverse the membrane as a helical segment. Over Arg321 to Leu356 the chain is Cytoplasmic.

As to quaternary structure, interacts with ITGAL, ITGAM and ITGB2. Interacts with thrombin/F2; this interaction switches the specificity of thrombin from a procoagulant to an anticoagulant and antifibrinolytic protease. Interacts with ANGP1 and ANGP2; these interactions significantly inhibit the generation of activated PC and TAFIa/CPB2 by the thrombin/thrombomodulin complex. Interacts with PF4; this interaction enhances generation of activated protein C. Interacts with HMGB1; this interaction inhibits HMGB1 inflammatory activity. In terms of tissue distribution, endothelial cells are unique in synthesizing thrombomodulin.

The protein localises to the membrane. Endothelial cell receptor that plays a critical role in regulating several physiological processes including hemostasis, coagulation, fibrinolysis, inflammation, and angiogenesis. Acts as a cofactor for thrombin activation of protein C/PROC on the surface of vascular endothelial cells leading to initiation of the activated protein C anticoagulant pathway. Also accelerates the activation of the plasma carboxypeptidase B2/CPB2, which catalyzes removal of C-terminal basic amino acids from its substrates including kinins or anaphylatoxins leading to fibrinolysis inhibition. Plays critical protective roles in changing the cleavage specificity of protease-activated receptor 1/PAR1, inhibiting endothelial cell permeability and inflammation. Suppresses inflammation distinctly from its anticoagulant cofactor activity by sequestering HMGB1 thereby preventing it from engaging cellular receptors such as RAGE and contributing to the inflammatory response. This is Thrombomodulin (THBD) from Bos taurus (Bovine).